We begin with the raw amino-acid sequence, 160 residues long: Transcription elongation factor GreA (160 aa).

Positions 49-73 (HAAKEEQSHNEGRIADLEDKLARAD) form a coiled coil.

Belongs to the GreA/GreB family.

In terms of biological role, necessary for efficient RNA polymerase transcription elongation past template-encoded arresting sites. The arresting sites in DNA have the property of trapping a certain fraction of elongating RNA polymerases that pass through, resulting in locked ternary complexes. Cleavage of the nascent transcript by cleavage factors such as GreA or GreB allows the resumption of elongation from the new 3'terminus. GreA releases sequences of 2 to 3 nucleotides. In Rhodopseudomonas palustris (strain BisA53), this protein is Transcription elongation factor GreA.